The sequence spans 234 residues: Urease accessory protein UreG 1 (234 aa).

The interval 1–29 is disordered; that stretch reads MTRTPTGVPMHLGHTHDAPAAVSADATRP. Residue 42–49 coordinates GTP; sequence GPVGSGKT.

This sequence belongs to the SIMIBI class G3E GTPase family. UreG subfamily. Homodimer. UreD, UreF and UreG form a complex that acts as a GTP-hydrolysis-dependent molecular chaperone, activating the urease apoprotein by helping to assemble the nickel containing metallocenter of UreC. The UreE protein probably delivers the nickel.

The protein localises to the cytoplasm. Functionally, facilitates the functional incorporation of the urease nickel metallocenter. This process requires GTP hydrolysis, probably effectuated by UreG. The chain is Urease accessory protein UreG 1 from Streptomyces griseus subsp. griseus (strain JCM 4626 / CBS 651.72 / NBRC 13350 / KCC S-0626 / ISP 5235).